Here is a 212-residue protein sequence, read N- to C-terminus: MQVLVASRNKKKLAELQRVLAAANVEGIELLSLADVPEYPETPETGATFEANARIKALDGVRNAGLPTVADDSGLAVDALNGMPGVLSARWCGAHGEDAENNRLLLAQLSDVPDDRRGARFVSSCVLAVPAEIADAADLEPEVAVTGEWEGRILRAEQGTNGFGYDPLFEPAEAPGQSSAELTPERKDELSHRGKALQQLVPALRVLAQSAQ.

A substrate-binding site is contributed by S7–K12. D72 (proton acceptor) is an active-site residue. A Mg(2+)-binding site is contributed by D72. Substrate contacts are provided by residues S73, F163–D166, K187, and H192–R193. Positions G164–G194 are disordered. The segment covering T183 to H192 has biased composition (basic and acidic residues).

Belongs to the HAM1 NTPase family. As to quaternary structure, homodimer. Requires Mg(2+) as cofactor.

It carries out the reaction XTP + H2O = XMP + diphosphate + H(+). The catalysed reaction is dITP + H2O = dIMP + diphosphate + H(+). The enzyme catalyses ITP + H2O = IMP + diphosphate + H(+). Functionally, pyrophosphatase that catalyzes the hydrolysis of nucleoside triphosphates to their monophosphate derivatives, with a high preference for the non-canonical purine nucleotides XTP (xanthosine triphosphate), dITP (deoxyinosine triphosphate) and ITP. Seems to function as a house-cleaning enzyme that removes non-canonical purine nucleotides from the nucleotide pool, thus preventing their incorporation into DNA/RNA and avoiding chromosomal lesions. This chain is dITP/XTP pyrophosphatase, found in Corynebacterium urealyticum (strain ATCC 43042 / DSM 7109).